The following is a 305-amino-acid chain: Mitochondrial citrate transporter D (305 aa).

3 Solcar repeats span residues Leu-10–Phe-101, Gln-111–Gln-197, and Arg-211–Phe-298. Transmembrane regions (helical) follow at residues Phe-16–Val-36, Ser-78–Trp-98, Leu-118–Val-137, Thr-176–Ala-196, Gln-208–Asn-228, and Leu-270–Val-291.

It belongs to the mitochondrial carrier (TC 2.A.29) family.

The protein localises to the mitochondrion inner membrane. It carries out the reaction citrate(in) + H(+)(in) = citrate(out) + H(+)(out). In terms of biological role, mitochondrial transporter that mediates citrate export from mitochondria to cytoplasm. Both ctpA, ctpB, and ctpD play important roles in citric acid transport across the mitochondrial membrane and function in a redundant manner. The chain is Mitochondrial citrate transporter D from Aspergillus niger (strain ATCC 1015 / CBS 113.46 / FGSC A1144 / LSHB Ac4 / NCTC 3858a / NRRL 328 / USDA 3528.7).